The chain runs to 100 residues: NADH-quinone oxidoreductase subunit K (100 aa).

The next 3 membrane-spanning stretches (helical) occupy residues 4-24, 28-48, and 60-80; these read LFHG…SLIV, ILFI…ALIV, and IMYI…LALL.

The protein belongs to the complex I subunit 4L family. NDH-1 is composed of 13 different subunits. Subunits NuoA, H, J, K, L, M, N constitute the membrane sector of the complex.

It localises to the cell membrane. It catalyses the reaction a quinone + NADH + 5 H(+)(in) = a quinol + NAD(+) + 4 H(+)(out). Its function is as follows. NDH-1 shuttles electrons from NADH, via FMN and iron-sulfur (Fe-S) centers, to quinones in the respiratory chain. The immediate electron acceptor for the enzyme in this species is believed to be ubiquinone. Couples the redox reaction to proton translocation (for every two electrons transferred, four hydrogen ions are translocated across the cytoplasmic membrane), and thus conserves the redox energy in a proton gradient. This Buchnera aphidicola subsp. Acyrthosiphon pisum (strain 5A) protein is NADH-quinone oxidoreductase subunit K.